The following is a 421-amino-acid chain: UDP-N-acetylglucosamine 1-carboxyvinyltransferase 1 (421 aa).

Residue K22–N23 coordinates phosphoenolpyruvate. UDP-N-acetyl-alpha-D-glucosamine is bound at residue R95. The active-site Proton donor is the C119. Residue C119 is modified to 2-(S-cysteinyl)pyruvic acid O-phosphothioketal. UDP-N-acetyl-alpha-D-glucosamine contacts are provided by residues R124–Q128, D308, and V330.

The protein belongs to the EPSP synthase family. MurA subfamily.

The protein resides in the cytoplasm. It catalyses the reaction phosphoenolpyruvate + UDP-N-acetyl-alpha-D-glucosamine = UDP-N-acetyl-3-O-(1-carboxyvinyl)-alpha-D-glucosamine + phosphate. It functions in the pathway cell wall biogenesis; peptidoglycan biosynthesis. Cell wall formation. Adds enolpyruvyl to UDP-N-acetylglucosamine. This is UDP-N-acetylglucosamine 1-carboxyvinyltransferase 1 from Staphylococcus aureus (strain bovine RF122 / ET3-1).